The sequence spans 128 residues: uncharacterized protein (128 aa).

An intrachain disulfide couples cysteine 10 to cysteine 13.

Belongs to the ArsC family.

This is an uncharacterized protein from Ureaplasma parvum serovar 3 (strain ATCC 700970).